The following is a 177-amino-acid chain: Decaprenylphosphoryl-5-phosphoribose phosphatase (177 aa).

Transmembrane regions (helical) follow at residues 35–55, 62–82, 124–144, and 150–170; these read HFGEHCIGWLILALLGAIALP, LVAGAGAFVAHAIAVLIKRLV, GLPLPVVLVPPMALSRILLGV, and VAVGVALGATVGAIVDSVGGG.

Belongs to the PA-phosphatase related phosphoesterase family.

Its subcellular location is the cell membrane. The enzyme catalyses trans,octa-cis-decaprenylphospho-beta-D-ribofuranose 5-phosphate + H2O = trans,octa-cis-decaprenylphospho-beta-D-ribofuranose + phosphate. It participates in cell wall biogenesis; cell wall polysaccharide biosynthesis. Phosphatase involved in the biosynthesis of decaprenylphosphoryl arabinose (DPA), which serves as the arabinose donor for the biosynthesis of arabinogalactan, the major mycobacterial cell wall polysaccharide. Catalyzes the dephosphorylation of decaprenylphosphoryl-5-phosphoribose (DPPR) to decaprenyl-phosphoribose (DPR). This chain is Decaprenylphosphoryl-5-phosphoribose phosphatase, found in Mycobacterium tuberculosis (strain CDC 1551 / Oshkosh).